Here is a 140-residue protein sequence, read N- to C-terminus: Ribonuclease P protein subunit p20 (140 aa).

This sequence belongs to the histone-like Alba family. In terms of assembly, component of nuclear RNase P and RNase MRP complexes. RNase P consists of a catalytic RNA moiety and 10 different protein chains; POP1, POP4, POP5, POP7, RPP14, RPP21, RPP25, RPP30, RPP38 and RPP40. Within the RNase P complex, POP1, POP7 and RPP25 form the 'finger' subcomplex, POP5, RPP14, RPP40 and homodimeric RPP30 form the 'palm' subcomplex, and RPP21, POP4 and RPP38 form the 'wrist' subcomplex. All subunits of the RNase P complex interact with the catalytic RNA. Several subunits of RNase P are also part of the RNase MRP complex. RNase MRP consists of a catalytic RNA moiety and about 8 protein subunits; POP1, POP7, RPP25, RPP30, RPP38, RPP40 and possibly also POP4 and POP5. Interacts with SMN1. POP7 forms a heterodimer with RPP25 that binds to the P3 stem loop of the catalytic RNA.

The protein resides in the nucleus. Its subcellular location is the nucleolus. The protein localises to the cytoplasm. It localises to the cytoplasmic granule. In terms of biological role, component of ribonuclease P, a ribonucleoprotein complex that generates mature tRNA molecules by cleaving their 5'-ends. Also a component of the MRP ribonuclease complex, which cleaves pre-rRNA sequences. This is Ribonuclease P protein subunit p20 (Pop7) from Mus musculus (Mouse).